A 365-amino-acid chain; its full sequence is Isopentenyl-diphosphate delta-isomerase (365 aa).

A substrate-binding site is contributed by 8–9 (RK). FMN-binding positions include 67 to 69 (SIT), serine 97, and asparagine 126. Substrate is bound at residue 97-99 (SQR). Residue glutamine 160 coordinates substrate. A Mg(2+)-binding site is contributed by glutamate 161. FMN contacts are provided by residues lysine 192, threonine 222, 272-274 (GIR), and 293-294 (AL).

Belongs to the IPP isomerase type 2 family. In terms of assembly, homooctamer. Dimer of tetramers. The cofactor is FMN. NADPH serves as cofactor. Mg(2+) is required as a cofactor.

The protein resides in the cytoplasm. It catalyses the reaction isopentenyl diphosphate = dimethylallyl diphosphate. In terms of biological role, involved in the biosynthesis of isoprenoids. Catalyzes the 1,3-allylic rearrangement of the homoallylic substrate isopentenyl (IPP) to its allylic isomer, dimethylallyl diphosphate (DMAPP). The chain is Isopentenyl-diphosphate delta-isomerase from Methanosarcina mazei (strain ATCC BAA-159 / DSM 3647 / Goe1 / Go1 / JCM 11833 / OCM 88) (Methanosarcina frisia).